A 119-amino-acid chain; its full sequence is Phosphoribosyl-AMP cyclohydrolase (119 aa).

Aspartate 72 contributes to the Mg(2+) binding site. Zn(2+) is bound at residue cysteine 73. Residues aspartate 74 and aspartate 76 each contribute to the Mg(2+) site. Residues cysteine 89 and cysteine 96 each coordinate Zn(2+).

It belongs to the PRA-CH family. In terms of assembly, homodimer. Mg(2+) serves as cofactor. Zn(2+) is required as a cofactor.

The protein resides in the cytoplasm. The catalysed reaction is 1-(5-phospho-beta-D-ribosyl)-5'-AMP + H2O = 1-(5-phospho-beta-D-ribosyl)-5-[(5-phospho-beta-D-ribosylamino)methylideneamino]imidazole-4-carboxamide. It participates in amino-acid biosynthesis; L-histidine biosynthesis; L-histidine from 5-phospho-alpha-D-ribose 1-diphosphate: step 3/9. Functionally, catalyzes the hydrolysis of the adenine ring of phosphoribosyl-AMP. In Methanocella arvoryzae (strain DSM 22066 / NBRC 105507 / MRE50), this protein is Phosphoribosyl-AMP cyclohydrolase.